Consider the following 64-residue polypeptide: Large ribosomal subunit protein bL33c (64 aa).

The protein belongs to the bacterial ribosomal protein bL33 family.

Its subcellular location is the plastid. It localises to the cyanelle. The chain is Large ribosomal subunit protein bL33c (rpl33) from Cyanophora paradoxa.